We begin with the raw amino-acid sequence, 466 residues long: Dynein axonemal assembly factor 11 (466 aa).

4 LRR repeats span residues 22–43 (SLEELSLHQQEIERLEHIDKWC), 45–66 (DLKILYLQNNLIGKIENVSKLK), 67–88 (KLEYLNLALNNIEKIENLEGCE), and 89–110 (ELAKLDLTVNFIGELSSIKNLQ). The LRRCT domain maps to 123 to 161 (NPCASFDHYREFVVATLPQLKWLDGKEIEPSERIKALQD). Positions 178–204 (LKRAKLKEEAQRKHQEEDKNEDKRSNA) form a coiled coil. The span at 185 to 202 (EEAQRKHQEEDKNEDKRS) shows a compositional bias: basic and acidic residues. 3 disordered regions span residues 185–206 (EEAQRKHQEEDKNEDKRSNAGF), 268–288 (MEKQRKKQEKLSEKKKKVKPP), and 391–466 (AFKS…PPLI). A compositionally biased stretch (basic residues) spans 269-287 (EKQRKKQEKLSEKKKKVKP). A CS domain is found at 301–396 (VNEPKIDFSL…GGQRAFKSMK (96 aa)). 2 stretches are compositionally biased toward basic and acidic residues: residues 398 to 425 (TSDRSREQTNTRSKHMEKLEVDPSKHSF) and 433 to 445 (QEKKHTPRRRPEP). The segment covering 450 to 460 (SEEDPTFEDNP) has biased composition (acidic residues).

It belongs to the tilB family. In terms of assembly, interacts (via CS domain) with ZMYND10 (via C-terminus). Expressed predominantly in testis and in nasal epithelial cells.

The protein localises to the cytoplasm. The protein resides in the cell projection. It localises to the cilium. It is found in the dynein axonemal particle. Its subcellular location is the flagellum. Involved in dynein arm assembly, is important for expression and transporting outer dynein arm (ODA) proteins from the cytoplasm to the cilia. Acts as a crucial component in the formation and motility of spermatozoal flagella. The protein is Dynein axonemal assembly factor 11 of Homo sapiens (Human).